The primary structure comprises 244 residues: Pyridoxine 5'-phosphate synthase (244 aa).

Residue asparagine 12 participates in 3-amino-2-oxopropyl phosphate binding. A 1-deoxy-D-xylulose 5-phosphate-binding site is contributed by 14-15; it reads DH. Arginine 23 lines the 3-amino-2-oxopropyl phosphate pocket. Histidine 48 serves as the catalytic Proton acceptor. 1-deoxy-D-xylulose 5-phosphate contacts are provided by arginine 50 and histidine 55. Glutamate 75 serves as the catalytic Proton acceptor. A 1-deoxy-D-xylulose 5-phosphate-binding site is contributed by threonine 105. Histidine 196 serves as the catalytic Proton donor. 3-amino-2-oxopropyl phosphate-binding positions include glycine 197 and 218–219; that span reads GH.

The protein belongs to the PNP synthase family. Homooctamer; tetramer of dimers.

Its subcellular location is the cytoplasm. It carries out the reaction 3-amino-2-oxopropyl phosphate + 1-deoxy-D-xylulose 5-phosphate = pyridoxine 5'-phosphate + phosphate + 2 H2O + H(+). The protein operates within cofactor biosynthesis; pyridoxine 5'-phosphate biosynthesis; pyridoxine 5'-phosphate from D-erythrose 4-phosphate: step 5/5. In terms of biological role, catalyzes the complicated ring closure reaction between the two acyclic compounds 1-deoxy-D-xylulose-5-phosphate (DXP) and 3-amino-2-oxopropyl phosphate (1-amino-acetone-3-phosphate or AAP) to form pyridoxine 5'-phosphate (PNP) and inorganic phosphate. The polypeptide is Pyridoxine 5'-phosphate synthase (Alcanivorax borkumensis (strain ATCC 700651 / DSM 11573 / NCIMB 13689 / SK2)).